A 316-amino-acid polypeptide reads, in one-letter code: Probable 5-dehydro-4-deoxyglucarate dehydratase 1 (316 aa).

It belongs to the DapA family.

The enzyme catalyses 5-dehydro-4-deoxy-D-glucarate + H(+) = 2,5-dioxopentanoate + CO2 + H2O. It participates in carbohydrate acid metabolism; D-glucarate degradation; 2,5-dioxopentanoate from D-glucarate: step 2/2. In Streptomyces coelicolor (strain ATCC BAA-471 / A3(2) / M145), this protein is Probable 5-dehydro-4-deoxyglucarate dehydratase 1.